A 146-amino-acid polypeptide reads, in one-letter code: Protein new-glue 3 (146 aa).

The first 23 residues, 1-23 (MRYSCVLLLLATVACLLIPQTGG), serve as a signal peptide directing secretion. The tract at residues 23 to 146 (GSTATTTSTS…RRARSARRLS (124 aa)) is disordered. Residues 24-66 (STATTTSTSASATTTTSASATTTTASDTTTTTAATTTTSSSSS) show a composition bias toward low complexity. Repeat copies occupy residues 31-38 (TSASATTT), 39-46 (TSASATTT), 47-53 (TASDTTT), and 54-61 (TTAATTTT). The 4 X 8 AA approximate tandem repeats of T-S-A-S-A-T-T-T stretch occupies residues 31–61 (TSASATTTTSASATTTTASDTTTTTAATTTT). The span at 67 to 92 (KSKKKKRTYHYTRHVYRPKRIRHIYR) shows a compositional bias: basic residues. The span at 93–106 (HKADDDESSTDRTS) shows a compositional bias: basic and acidic residues. Residues 116–132 (SSSSSSSGSTSSRSGNS) are compositionally biased toward low complexity. The segment covering 133–146 (RIRRRRARSARRLS) has biased composition (basic residues).

In terms of tissue distribution, salivary gland specific.

The protein localises to the secreted. The sequence is that of Protein new-glue 3 (ng3) from Drosophila melanogaster (Fruit fly).